Here is a 307-residue protein sequence, read N- to C-terminus: Ribonuclease Z (307 aa).

Residues His-63, His-65, Asp-67, His-68, His-140, Asp-211, and His-269 each contribute to the Zn(2+) site. Asp-67 acts as the Proton acceptor in catalysis.

Belongs to the RNase Z family. As to quaternary structure, homodimer. Requires Zn(2+) as cofactor.

It catalyses the reaction Endonucleolytic cleavage of RNA, removing extra 3' nucleotides from tRNA precursor, generating 3' termini of tRNAs. A 3'-hydroxy group is left at the tRNA terminus and a 5'-phosphoryl group is left at the trailer molecule.. Its function is as follows. Zinc phosphodiesterase, which displays some tRNA 3'-processing endonuclease activity. Probably involved in tRNA maturation, by removing a 3'-trailer from precursor tRNA. In Bacillus licheniformis (strain ATCC 14580 / DSM 13 / JCM 2505 / CCUG 7422 / NBRC 12200 / NCIMB 9375 / NCTC 10341 / NRRL NRS-1264 / Gibson 46), this protein is Ribonuclease Z.